The primary structure comprises 1461 residues: MADDLFDFIETEGNFSQLLAAAAAAAEEEGIASGPDGGSQGSRRRGSSGEDLLFGPGGLFSDDAAEAEAAVLAAAAGATRPPRPPSAQQQRHARRGSGEIVVLDDEDEEEDEPGSPAAGSPGRALHQGSEHGHLVLGPRSRAGSGPRPPTPAALAAAEAGAPGGPGRSSPSAASPASSSSGSSGSSGSPGPSAAPRRWSPARGDPVGEPGPAARPRTPAPPAQPAAVAAAPARRGPASPASPAAGPVSAPGGGGAPSGGGDRGRHHHQHREPLLDEPAAARRLDPRPLGARSPVSSNPNSSSSSTTTVAVEPVARGPEKDEDGLGLAGDGGAPLQRQPRRRRAGEGALRRGRGFSSSSSGGSDSDLSPARSPSAPRAPAAAAAAARRSASSSSSSSSSSSSSSSSEGEEDEGVRPGAPLARAGPPPSPPAPAAAPRPSASSASATSSSAAASPAPAPEPARPPRRKRRSTNNHLSLMADGPPPTDGPLLTPLGEPWPGSDPPADGRVRYGGAGDSREGLWDEDDVRQAAARYRAAAGPVPVFIPEMGDSRKQHEALVRLIYSGAAGEAMSWLQNPRMQAPDQRFNQFCQRRVHAPHGHGSFITGSVTPPLPHIGDAMAAQDPLWALPHAVSAVAMSRRYDRTQKTFILQSLRRAYADMAYPGRAADPRAGEATVEALCARVRAAFAAAQPGRVPRELADACVLACRGVLERLLPCPLRLPAPARAPAALGPACLEEVTAALLALRDAIPGAGPAERQQAADSVALVARTVAPLVRYSVDGARAREAAWTYAAALFAPANVAGARLAEAAARPGPAEPAPGLPPLWPEQPGLVVPAPAPAAAGAPSGLPGSGPSSPASTKSGSSTKSSSGTKSGLSGSSGYASSPAAGPDPAPERRKKKRRAPGARRPGDGEEDEGLSGSALRGDGHGHRDDEEDRGPRRKRRSLGLGPAPDPAPALVSSSSSSSSSEDDRLRRPLGPMPEHPAPDGGFRRVPAGETHTPRPSAAALAAYCPPEVARALVDQEVFPELWRPALTFDPAALAHIAARRGAAGAPLRRRAAWMRQIADPEDVRVVVLYDPLPHEELCAEPAEGAPRPAWDPRRGGLSALLAAFAHRLCTPDSHAWAGNWTGRPDIGRLNAQGVLLLSARDLGFAGAVEYLCSRLGAARRRLIVLDTIEDWPADGPAVGDYHVYVRARLDPAAQCAVRWPECRELRAAVLDSSSIVGPACFARVEASFARLHPGAEPLRLCRQDNVRYTVSTRAGPRTPVPLPPRAYRERVLPTVDGCKDMARQRSALGLGDPDFDAGAAFGHRAANRWGLGAPLRPVFVSCGRRGLAELRGPEGLPAELRAFCAAALLEPDAEAAPLVLAPGALAAAGAPPAVRWDFAPFETSVRAAAGGAVETHRPSGARGPGEDGEDSAAVEIVGFRGGDGRPRGPLGPIKVEAISDDEEAEDAGNPYLLLR.

Disordered stretches follow at residues Ala25–Phe60, Ala75–Gly518, Arg811–Ser1002, and Ala1395–Arg1461. Residues Ala75 to Gln90 show a composition bias toward low complexity. Acidic residues predominate over residues Val102–Pro113. 2 stretches are compositionally biased toward low complexity: residues Arg167–Arg197 and Pro224–Ala249. Residues Pro250–Gly260 are compositionally biased toward gly residues. Basic and acidic residues predominate over residues Arg270 to Pro285. 2 stretches are compositionally biased toward low complexity: residues Ser292 to Val308 and Gly353 to Ser405. The segment covering Gly423–Ala434 has biased composition (pro residues). Residues Pro435–Pro453 show a composition bias toward low complexity. Residues Pro814–Pro826 are compositionally biased toward pro residues. The segment covering Pro838 to Pro888 has biased composition (low complexity). Over residues Arg894–Gly903 the composition is skewed to basic residues. The segment covering Leu944–Ser965 has biased composition (low complexity).

The protein belongs to the herpesviridae ICP4 family. In terms of processing, a long stretch of serine residues may be a major site of phosphorylation.

It localises to the host nucleus. Functionally, this IE protein is a multifunctional protein capable of migrating to the nucleus, binding to DNA, trans-activating other viral genes, and autoregulating its own synthesis. The chain is Major viral transcription factor ICP4 homolog (IE) from Sus scrofa (Pig).